Consider the following 271-residue polypeptide: DNA repair protein RecO (271 aa).

This sequence belongs to the RecO family.

In terms of biological role, involved in DNA repair and RecF pathway recombination. The polypeptide is DNA repair protein RecO (Synechococcus sp. (strain CC9311)).